A 421-amino-acid polypeptide reads, in one-letter code: PDZ and LIM domain protein 7 (421 aa).

Residues 1–85 (MEEYKVTLDG…KLGLVLSRFA (85 aa)) enclose the PDZ domain. Positions 115–193 (IARPFGSGTP…STGPAVRPPW (79 aa)) are disordered. Residues 147-172 (YPSSQMPQGQLQNGQKSRTVSNVSGK) show a composition bias toward polar residues. 3 consecutive LIM zinc-binding domains span residues 244–302 (PVCS…ARFA), 303–362 (PNCA…MFGT), and 363–421 (KCRG…FSNV).

Its subcellular location is the cytoplasm. It is found in the cytoskeleton. May function as a scaffold on which the coordinated assembly of proteins can occur. May play a role as an adapter that, via its PDZ domain, localizes LIM-binding proteins to actin filaments of both skeletal muscle and nonmuscle tissues. The sequence is that of PDZ and LIM domain protein 7 (pdlim7) from Xenopus laevis (African clawed frog).